We begin with the raw amino-acid sequence, 394 residues long: Elongation factor Tu (394 aa).

The 195-residue stretch at 10-204 (KPHVNVGTIG…ALDSYIPEPE (195 aa)) folds into the tr-type G domain. The segment at 19–26 (GHVDHGKT) is G1. 19–26 (GHVDHGKT) provides a ligand contact to GTP. T26 lines the Mg(2+) pocket. The G2 stretch occupies residues 60-64 (GITIN). The tract at residues 81 to 84 (DCPG) is G3. GTP is bound by residues 81–85 (DCPGH) and 136–139 (NKCD). Positions 136–139 (NKCD) are G4. The interval 174-176 (SAL) is G5.

The protein belongs to the TRAFAC class translation factor GTPase superfamily. Classic translation factor GTPase family. EF-Tu/EF-1A subfamily. Monomer.

Its subcellular location is the cytoplasm. The enzyme catalyses GTP + H2O = GDP + phosphate + H(+). Its function is as follows. GTP hydrolase that promotes the GTP-dependent binding of aminoacyl-tRNA to the A-site of ribosomes during protein biosynthesis. In Shewanella amazonensis (strain ATCC BAA-1098 / SB2B), this protein is Elongation factor Tu.